The sequence spans 320 residues: Protein phosphatase PTC7 homolog fig (320 aa).

Residues 49-315 form the PPM-type phosphatase domain; sequence PYLVTAVQGR…DDITLILASV (267 aa). Mn(2+) is bound by residues D93, G94, and D238.

The protein belongs to the PP2C family. Mg(2+) serves as cofactor. It depends on Mn(2+) as a cofactor.

It carries out the reaction O-phospho-L-seryl-[protein] + H2O = L-seryl-[protein] + phosphate. The enzyme catalyses O-phospho-L-threonyl-[protein] + H2O = L-threonyl-[protein] + phosphate. The sequence is that of Protein phosphatase PTC7 homolog fig from Drosophila yakuba (Fruit fly).